The sequence spans 1019 residues: MGTRDDVPEAKVLVPVAVYCGSIPRTSAGPRVLPPGSINSSLPHGEGSLQPEPRALLNNEEPSQLLRGLGQLGGLKLDTPSKGWQARNGHPRNLRALSLGDQPLVLLPSPESEANSVARDTIQIKDKLKKRRLSEGLAASSRASLDPGGGPQGVPLHSTIPRATSQRLLRVPRPMPLIQSIPTTPEASGVKEKGLDLPGSIPGPHELRPGAQEAQISWQYLHCNDEKMQKSLGAIVIPPIPKARTVAATPSRVPGSLPSPLPPGQGVLTGLRAPRTRLARGSGPREKTPASLEPKPLASPIRDRPAAAKKPALPFSQSAPTLTAFSFDCAREACPPLKEEDQKEIGTKIQVTISKSAREKMQLKQMKEMELLRRLEEPRTGQELTSQCLGSQRAFMKEGLLPLRGSGTLSVPTRLSGPCRNDVSIILRKWASRASLPSIPISRQEPRFARHASANSLPAVLTLGSPEWEEEEEMDLRACKELRPFSNPELGLRDALQCLNSSDWQMKEKGLVSIQRLAACHSEVLTGKLHDVCLVVTGEVTNLRSKVSHLAISTLGDLFQALKKNMDQEAEEIARCLLQKMADTNEFIQRAAGQSLRAMVENVTLARSLVVLTSAGVYHRNPLIRKYAAEHLSAVLEQIGAEKLLSGTRDSTDMLVHNLVRLAQDSNQDTRFYGRKMVNILMANTKFDAFLKQSLPSYDLQKVMAAIKQQGIEDNDELPSAKGRKVLRSLVVCENGLPIKEGLSCNGPRLVGLRSTLQGRGEMVEQLRELTRLLEAKDFRSRMEGVGQLLELCKAKTELVTAHLVQVFDAFTPRLQDSNKKVNQWALESFAKMIPLLRESLHPMLLSIIITVADNLNSKNSGIYAAAVAVLDAMVESLDNLCLLPALAGRVRFLSGRAVLDVTDRLAVLVASVYPRKPQAVERHVLPILWHFLNTATRNGTLPGPSGNIRGVVCRLSRSLQEHMGSRLLDFAASQPKHVLKTLQELLDSESLGGSRKATDRGVAPDSKTTGSSYPFQLD.

4 disordered regions span residues 28–54 (AGPR…PEPR), 131–158 (RRLS…PLHS), 249–311 (TPSR…AKKP), and 991–1019 (SLGG…FQLD). Positions 1007–1019 (SKTTGSSYPFQLD) are enriched in polar residues.

Belongs to the Crescerin family.

The protein is TOG array regulator of axonemal microtubules protein 2 of Homo sapiens (Human).